The primary structure comprises 363 residues: Mitochondrial RNA-splicing protein MRS1 (363 aa).

It localises to the mitochondrion. Its function is as follows. Function in mitochondrial RNA splicing in the excision of mitochondrial group I introns aI1 and aI5 beta from COX1 and bI3 from COB transcripts and thus would be involved in obtaining the correct structure of the intron, to allow the RNA catalyzed reactions to occur. The polypeptide is Mitochondrial RNA-splicing protein MRS1 (MRS1) (Saccharomyces paradoxus (Yeast)).